We begin with the raw amino-acid sequence, 150 residues long: Large ribosomal subunit protein uL13 (150 aa).

It belongs to the universal ribosomal protein uL13 family. Part of the 50S ribosomal subunit.

Functionally, this protein is one of the early assembly proteins of the 50S ribosomal subunit, although it is not seen to bind rRNA by itself. It is important during the early stages of 50S assembly. This Chlamydia trachomatis serovar A (strain ATCC VR-571B / DSM 19440 / HAR-13) protein is Large ribosomal subunit protein uL13.